We begin with the raw amino-acid sequence, 622 residues long: Presenilin-A (622 aa).

Positions 1–16 (MKENEDEINKTDEKYK) are enriched in basic and acidic residues. Disordered stretches follow at residues 1 to 65 (MKEN…NLEN) and 132 to 160 (VSEQNSDECGSKVDKDLDEDDDDDDDETE). Topologically, residues 1–168 (MKENEDEINK…TEVPELVDYS (168 aa)) are cytoplasmic. A compositionally biased stretch (low complexity) spans 21–62 (SNNGNNKNKNNNNNNNNNNNNNNNNNNNNNNNNNNNNNGNSN). Residues 147 to 160 (DLDEDDDDDDDETE) are compositionally biased toward acidic residues. Residues 169–189 (EMIVSILYPVCITMVIVVLAI) form a helical membrane-spanning segment. At 190–227 (RAISSSTSKNSQIVEISNDNSGGNGDSSSGADKMVFDS) the chain is on the lumenal side. A helical membrane pass occupies residues 228–248 (VVNSLIFLAVIILSTTIMVVL). The Cytoplasmic segment spans residues 249–265 (YKFKLMKALYAWLMGTS). Residues 266–286 (ILLLGVFGGFLFLILLAYLNL) form a helical membrane-spanning segment. At 287-289 (GLD) the chain is on the lumenal side. Residues 290 to 310 (YVTFVIVVWNFSVGGIVCIFW) form a helical membrane-spanning segment. Position 311 (Tyr311) is a topological domain, cytoplasmic. Residues 312–332 (SPKLLNQGYLISISVLMALFF) form a helical membrane-spanning segment. The Lumenal segment spans residues 333–341 (SRLPDWTTW). A helical transmembrane segment spans residues 342 to 362 (GILSIVSIYDIFAVLCPGGPL). The active site involves Asp351. Residues 363–538 (RILIETAQKR…SYVKPKQSIR (176 aa)) are Cytoplasmic-facing. The disordered stretch occupies residues 419–477 (NNNNNEDENKNNTEDGNNNNNKNKNNNNNNNNRIENENGAENSSENGSITPPPTIPNFI). A compositionally biased stretch (low complexity) spans 432 to 466 (EDGNNNNNKNKNNNNNNNNRIENENGAENSSENGS). Residues 539–559 (LGLGDFVFYSVLIGKAASYQI) traverse the membrane as a helical segment. The active site involves Asp543. The Lumenal segment spans residues 560-562 (TTV). The chain crosses the membrane as a helical span at residues 563 to 583 (FTVFIAIITGLFLTLILLAVF). Over 584 to 588 (RRALP) the chain is Cytoplasmic. A PAL motif is present at residues 588-590 (PAL). Residues 589 to 609 (ALPMSIIFGIIVFFLTFKILI) constitute an intramembrane region (helical). Residues 610–622 (QYIYFLGENQIFV) lie on the Cytoplasmic side of the membrane.

This sequence belongs to the peptidase A22A family. In terms of assembly, homodimer. Component of the gamma-secretase complex, a complex composed of a presenilin homodimer, nicastrin, aph1 and pen2.

The protein resides in the endoplasmic reticulum membrane. It is found in the golgi apparatus membrane. Its function is as follows. Probable catalytic subunit of the gamma-secretase complex, an endoprotease complex that catalyzes the intramembrane cleavage of integral membrane proteins such as Notch receptors. Requires the other members of the gamma-secretase complex to have a protease activity. The chain is Presenilin-A (psenA) from Dictyostelium discoideum (Social amoeba).